A 459-amino-acid chain; its full sequence is Putrescine aminotransferase (459 aa).

Pyridoxal 5'-phosphate-binding positions include 150-151 and Q274; that span reads GT. At K300 the chain carries N6-(pyridoxal phosphate)lysine. T332 lines the pyridoxal 5'-phosphate pocket.

Belongs to the class-III pyridoxal-phosphate-dependent aminotransferase family. Putrescine aminotransferase subfamily. Pyridoxal 5'-phosphate serves as cofactor.

It carries out the reaction an alkane-alpha,omega-diamine + 2-oxoglutarate = an omega-aminoaldehyde + L-glutamate. The catalysed reaction is putrescine + 2-oxoglutarate = 1-pyrroline + L-glutamate + H2O. It catalyses the reaction cadaverine + 2-oxoglutarate = 5-aminopentanal + L-glutamate. It functions in the pathway amine and polyamine degradation; putrescine degradation; 4-aminobutanal from putrescine (transaminase route): step 1/1. Functionally, catalyzes the aminotransferase reaction from putrescine to 2-oxoglutarate, leading to glutamate and 4-aminobutanal, which spontaneously cyclizes to form 1-pyrroline. This is the first step in one of two pathways for putrescine degradation, where putrescine is converted into 4-aminobutanoate (gamma-aminobutyrate or GABA) via 4-aminobutanal. Also functions as a cadaverine transaminase in a a L-lysine degradation pathway to succinate that proceeds via cadaverine, glutarate and L-2-hydroxyglutarate. The chain is Putrescine aminotransferase from Salmonella paratyphi A (strain ATCC 9150 / SARB42).